The sequence spans 128 residues: Large ribosomal subunit protein bL12c (128 aa).

It belongs to the bacterial ribosomal protein bL12 family. As to quaternary structure, homodimer. Part of the ribosomal stalk of the 50S ribosomal subunit. Forms a multimeric L10(L12)X complex, where L10 forms an elongated spine to which 2 to 4 L12 dimers bind in a sequential fashion. Binds GTP-bound translation factors.

Its subcellular location is the plastid. It is found in the chloroplast. Its function is as follows. Forms part of the ribosomal stalk which helps the ribosome interact with GTP-bound translation factors. Is thus essential for accurate translation. The protein is Large ribosomal subunit protein bL12c of Phaeodactylum tricornutum (strain CCAP 1055/1).